We begin with the raw amino-acid sequence, 433 residues long: Alpha-(1,3)-fucosyltransferase fut-1 (433 aa).

Residues M1 to R12 lie on the Cytoplasmic side of the membrane. Residues W13 to I32 form a helical; Signal-anchor for type II membrane protein membrane-spanning segment. Over S33 to D433 the chain is Lumenal. Residues N194 and N359 are each glycosylated (N-linked (GlcNAc...) asparagine).

Belongs to the glycosyltransferase 10 family. The cofactor is Mg(2+). Mn(2+) is required as a cofactor. In terms of processing, N-glycosylated. Glycosylation is important for enzymatic activity. In terms of tissue distribution, expressed in the pharyngeal-intestinal (PI) and anal valves. Expressed in ASG neurons and in one or two neurons in the retrovesicular ganglion and two neurons posterior to the PI valve and PHA and PHB neurons in the tail.

It localises to the golgi apparatus. Its subcellular location is the golgi stack membrane. It carries out the reaction N(4)-{beta-D-GlcNAc-(1-&gt;2)-alpha-D-Man-(1-&gt;3)-[beta-D-GlcNAc-(1-&gt;2)-alpha-D-Man-(1-&gt;6)]-beta-D-Man-(1-&gt;4)-beta-D-GlcNAc-(1-&gt;4)-beta-D-GlcNAc}-L-asparaginyl-[protein] + GDP-beta-L-fucose = N(4)-{beta-D-GlcNAc-(1-&gt;2)-alpha-D-Man-(1-&gt;3)-[beta-D-GlcNAc-(1-&gt;2)-alpha-D-Man-(1-&gt;6)]-beta-D-Man-(1-&gt;4)-beta-D-GlcNAc-(1-&gt;4)-[alpha-L-Fuc(1-&gt;3)]-beta-D-GlcNAc}-L-asparaginyl-[protein] + GDP + H(+). The protein operates within protein modification; protein glycosylation. Its activity is regulated as follows. Inhibited by Cu(2+) or Zn(2+) and to a lesser extent Ni(2+) ions. In terms of biological role, preferentially catalyzes the addition of fucose in alpha 1-3 linkage to the first GlcNAc residue (with or without alpha 1,6-linked fucose), next to the peptide chains in N-glycans. Unlike in mammals, does not require the prior action of N-acetylglucosaminyltransferase I to generate complex N-glycans. The sequence is that of Alpha-(1,3)-fucosyltransferase fut-1 from Caenorhabditis elegans.